A 139-amino-acid chain; its full sequence is Putative nickel-responsive regulator (139 aa).

Positions 79, 90, 92, and 98 each coordinate Ni(2+).

The protein belongs to the transcriptional regulatory CopG/NikR family. The cofactor is Ni(2+).

Its function is as follows. Transcriptional regulator. This Geotalea uraniireducens (strain Rf4) (Geobacter uraniireducens) protein is Putative nickel-responsive regulator.